The chain runs to 57 residues: uncharacterized protein (57 aa).

The next 2 membrane-spanning stretches (helical) occupy residues 4–26 and 33–55; these read VNIL…SELW and ALGY…IAIL.

The protein localises to the cell membrane. This is an uncharacterized protein from Methanocaldococcus jannaschii (strain ATCC 43067 / DSM 2661 / JAL-1 / JCM 10045 / NBRC 100440) (Methanococcus jannaschii).